The sequence spans 591 residues: Serine/threonine-protein kinase Nek2 (591 aa).

Residues 4 to 258 (YEVLEQIGKG…AAQLLKHPQL (255 aa)) form the Protein kinase domain. Residues 10–18 (IGKGAFGSA) and Lys-33 contribute to the ATP site. Asp-129 (proton acceptor) is an active-site residue. 3 disordered regions span residues 309–331 (LGNERTVTFSKPSPERNSVSSTR), 387–408 (EPPKTSYNRTYRSELPSKTTPN), and 500–534 (RTDGDNGSDSSGRNATAASSRGSNDSRQQRFDTSS). Polar residues-rich tracts occupy residues 391–408 (TSYNRTYRSELPSKTTPN) and 504–534 (DNGSDSSGRNATAASSRGSNDSRQQRFDTSS).

This sequence belongs to the protein kinase superfamily. NEK Ser/Thr protein kinase family. NIMA subfamily.

It carries out the reaction L-seryl-[protein] + ATP = O-phospho-L-seryl-[protein] + ADP + H(+). It catalyses the reaction L-threonyl-[protein] + ATP = O-phospho-L-threonyl-[protein] + ADP + H(+). May be involved in plant development processes. This chain is Serine/threonine-protein kinase Nek2 (NEK2), found in Oryza sativa subsp. indica (Rice).